We begin with the raw amino-acid sequence, 157 residues long: S-ribosylhomocysteine lyase 2 (157 aa).

The Fe cation site is built by H54, H58, and C124.

Belongs to the LuxS family. As to quaternary structure, homodimer. Fe cation is required as a cofactor.

It carries out the reaction S-(5-deoxy-D-ribos-5-yl)-L-homocysteine = (S)-4,5-dihydroxypentane-2,3-dione + L-homocysteine. Its function is as follows. Involved in the synthesis of autoinducer 2 (AI-2) which is secreted by bacteria and is used to communicate both the cell density and the metabolic potential of the environment. The regulation of gene expression in response to changes in cell density is called quorum sensing. Catalyzes the transformation of S-ribosylhomocysteine (RHC) to homocysteine (HC) and 4,5-dihydroxy-2,3-pentadione (DPD). This chain is S-ribosylhomocysteine lyase 2, found in Lactobacillus delbrueckii subsp. bulgaricus (strain ATCC BAA-365 / Lb-18).